The sequence spans 195 residues: 3-isopropylmalate dehydratase small subunit (195 aa).

Belongs to the LeuD family. LeuD type 1 subfamily. As to quaternary structure, heterodimer of LeuC and LeuD.

The catalysed reaction is (2R,3S)-3-isopropylmalate = (2S)-2-isopropylmalate. It functions in the pathway amino-acid biosynthesis; L-leucine biosynthesis; L-leucine from 3-methyl-2-oxobutanoate: step 2/4. Catalyzes the isomerization between 2-isopropylmalate and 3-isopropylmalate, via the formation of 2-isopropylmaleate. The chain is 3-isopropylmalate dehydratase small subunit from Karelsulcia muelleri (strain GWSS) (Sulcia muelleri).